Here is a 311-residue protein sequence, read N- to C-terminus: LOB domain-containing protein 10 (311 aa).

Residues 4–105 (TPCAACKLLR…QDLLTAKEEL (102 aa)) form the LOB domain. Residues 264–277 (LQEGQEQTEEGQFL) are compositionally biased toward low complexity. A disordered region spans residues 264-311 (LQEGQEQTEEGQFLMQPMGQENLHDEEEEEELEPPVKWRMSENKEASF). Acidic residues predominate over residues 287–296 (HDEEEEEELE). Positions 297–311 (PPVKWRMSENKEASF) are enriched in basic and acidic residues.

It belongs to the LOB domain-containing protein family.

In Arabidopsis thaliana (Mouse-ear cress), this protein is LOB domain-containing protein 10 (LBD10).